The chain runs to 262 residues: Thrombin-like enzyme calobin-1 (262 aa).

The N-terminal stretch at 1-18 (MVLISVLANLLILQLSYA) is a signal peptide. Positions 19-24 (QKSSEL) are excised as a propeptide. A Peptidase S1 domain is found at 25–253 (VIGGDECNIN…HLDWIQSIIA (229 aa)). 6 disulfides stabilise this stretch: C31-C165, C52-C68, C100-C260, C144-C214, C176-C193, and C204-C229. H67 acts as the Charge relay system in catalysis. An N-linked (GlcNAc...) asparagine glycan is attached at N105. D112 functions as the Charge relay system in the catalytic mechanism. The active-site Charge relay system is the S208.

The protein belongs to the peptidase S1 family. Snake venom subfamily. Monomer. N-glycosylated. Expressed by the venom gland.

Its subcellular location is the secreted. With respect to regulation, strongly inhibited by PMSF, and moderately by benzamidine and soybean trypsin inhibitor. Thrombin-like snake venom serine protease. Has a coagulant activity. Acts on alpha-chains of fibrinogen (FGA) generating fibrinopeptide A. The polypeptide is Thrombin-like enzyme calobin-1 (Gloydius ussuriensis (Ussuri mamushi)).